We begin with the raw amino-acid sequence, 382 residues long: UDP-4-amino-4-deoxy-L-arabinose--oxoglutarate aminotransferase (382 aa).

N6-(pyridoxal phosphate)lysine is present on Lys-182.

Belongs to the DegT/DnrJ/EryC1 family. ArnB subfamily. In terms of assembly, homodimer. The cofactor is pyridoxal 5'-phosphate.

It catalyses the reaction UDP-4-amino-4-deoxy-beta-L-arabinose + 2-oxoglutarate = UDP-beta-L-threo-pentopyranos-4-ulose + L-glutamate. It functions in the pathway nucleotide-sugar biosynthesis; UDP-4-deoxy-4-formamido-beta-L-arabinose biosynthesis; UDP-4-deoxy-4-formamido-beta-L-arabinose from UDP-alpha-D-glucuronate: step 2/3. Its pathway is bacterial outer membrane biogenesis; lipopolysaccharide biosynthesis. Functionally, catalyzes the conversion of UDP-4-keto-arabinose (UDP-Ara4O) to UDP-4-amino-4-deoxy-L-arabinose (UDP-L-Ara4N). The modified arabinose is attached to lipid A and is required for resistance to polymyxin and cationic antimicrobial peptides. This Pectobacterium carotovorum subsp. carotovorum (strain PC1) protein is UDP-4-amino-4-deoxy-L-arabinose--oxoglutarate aminotransferase.